A 209-amino-acid chain; its full sequence is Transmembrane emp24 domain-containing protein B (209 aa).

An N-terminal signal peptide occupies residues 1 to 24; sequence MNKTNQLINICILVTLFLIGSSSA. Over 25-174 the chain is Lumenal; the sequence is LTLQVEPKSQ…RDTSESTNAR (150 aa). In terms of domain architecture, GOLD spans 34-119; the sequence is QECFYNFIES…AKVVTFTWAS (86 aa). A helical membrane pass occupies residues 175-195; sequence VVWWTIAEVIVLVVMGVGQIW. At 196 to 209 the chain is on the cytoplasmic side; sequence YLRKWFDNKSTGRV.

It belongs to the EMP24/GP25L family.

The protein localises to the cytoplasmic vesicle membrane. Functionally, could have a role in the budding of coatomer-coated and other species of coated vesicles. In Dictyostelium discoideum (Social amoeba), this protein is Transmembrane emp24 domain-containing protein B (empB).